We begin with the raw amino-acid sequence, 931 residues long: Isoleucine--tRNA ligase (931 aa).

A 'HIGH' region motif is present at residues 58–68; that stretch reads PYANGHLHCGH. Glutamate 559 contacts L-isoleucyl-5'-AMP. The 'KMSKS' region motif lies at 600–604; it reads KLSKS. Lysine 603 serves as a coordination point for ATP. 4 residues coordinate Zn(2+): cysteine 894, cysteine 897, cysteine 914, and cysteine 917.

This sequence belongs to the class-I aminoacyl-tRNA synthetase family. IleS type 1 subfamily. As to quaternary structure, monomer. Zn(2+) serves as cofactor.

Its subcellular location is the cytoplasm. The catalysed reaction is tRNA(Ile) + L-isoleucine + ATP = L-isoleucyl-tRNA(Ile) + AMP + diphosphate. Functionally, catalyzes the attachment of isoleucine to tRNA(Ile). As IleRS can inadvertently accommodate and process structurally similar amino acids such as valine, to avoid such errors it has two additional distinct tRNA(Ile)-dependent editing activities. One activity is designated as 'pretransfer' editing and involves the hydrolysis of activated Val-AMP. The other activity is designated 'posttransfer' editing and involves deacylation of mischarged Val-tRNA(Ile). The polypeptide is Isoleucine--tRNA ligase (Legionella pneumophila (strain Paris)).